Consider the following 356-residue polypeptide: uncharacterized protein (356 aa).

3 helical membrane-spanning segments follow: residues 258–275 (SALQ…VFYY), 290–312 (PHWL…TEAL), and 325–347 (LVLL…TLFS).

It localises to the cell membrane. This is an uncharacterized protein from Archaeoglobus fulgidus (strain ATCC 49558 / DSM 4304 / JCM 9628 / NBRC 100126 / VC-16).